Here is a 574-residue protein sequence, read N- to C-terminus: Proline--tRNA ligase (574 aa).

Belongs to the class-II aminoacyl-tRNA synthetase family. ProS type 1 subfamily. Homodimer.

The protein resides in the cytoplasm. It catalyses the reaction tRNA(Pro) + L-proline + ATP = L-prolyl-tRNA(Pro) + AMP + diphosphate. Functionally, catalyzes the attachment of proline to tRNA(Pro) in a two-step reaction: proline is first activated by ATP to form Pro-AMP and then transferred to the acceptor end of tRNA(Pro). As ProRS can inadvertently accommodate and process non-cognate amino acids such as alanine and cysteine, to avoid such errors it has two additional distinct editing activities against alanine. One activity is designated as 'pretransfer' editing and involves the tRNA(Pro)-independent hydrolysis of activated Ala-AMP. The other activity is designated 'posttransfer' editing and involves deacylation of mischarged Ala-tRNA(Pro). The misacylated Cys-tRNA(Pro) is not edited by ProRS. This is Proline--tRNA ligase from Nautilia profundicola (strain ATCC BAA-1463 / DSM 18972 / AmH).